The sequence spans 102 residues: Co-chaperonin GroES (102 aa).

The protein belongs to the GroES chaperonin family. As to quaternary structure, heptamer of 7 subunits arranged in a ring. Interacts with the chaperonin GroEL.

The protein resides in the cytoplasm. In terms of biological role, together with the chaperonin GroEL, plays an essential role in assisting protein folding. The GroEL-GroES system forms a nano-cage that allows encapsulation of the non-native substrate proteins and provides a physical environment optimized to promote and accelerate protein folding. GroES binds to the apical surface of the GroEL ring, thereby capping the opening of the GroEL channel. This chain is Co-chaperonin GroES, found in Chlamydia trachomatis serovar L2 (strain ATCC VR-902B / DSM 19102 / 434/Bu).